A 237-amino-acid polypeptide reads, in one-letter code: GCN5-related N-acetyltransferase 3, chloroplastic (237 aa).

Residues 1–93 (MGLVGCVGKS…RAISRSDVIV (93 aa)) constitute a chloroplast transit peptide. The 144-residue stretch at 94–237 (SVFCKPQHVD…TMMFTKSLEA (144 aa)) folds into the N-acetyltransferase domain. Acetyl-CoA-binding positions include 171-173 (LMV), 179-184 (RMGIGK), 207-209 (FED), and Phe214.

It belongs to the acetyltransferase family. GNAT subfamily. Oligomer. Autoacetylated. As to expression, expressed in green tissues.

The protein localises to the plastid. It is found in the chloroplast. The catalysed reaction is an N-terminal L-alpha-aminoacyl-[protein] + acetyl-CoA = N-terminal N(alpha)-acetyl-L-alpha-aminoacyl-[protein] + CoA + H(+). It carries out the reaction L-lysyl-[protein] + acetyl-CoA = N(6)-acetyl-L-lysyl-[protein] + CoA + H(+). Protein acetyltransferase with dual specificity triggering both N-alpha-acetylation (NTA) and epsilon-lysine acetylation (KA), possibly with a low efficiency or toward specific plastid substrates. The sequence is that of GCN5-related N-acetyltransferase 3, chloroplastic from Arabidopsis thaliana (Mouse-ear cress).